The following is a 230-amino-acid chain: UPF0173 metal-dependent hydrolase LI0883 (230 aa).

Belongs to the UPF0173 family.

The protein is UPF0173 metal-dependent hydrolase LI0883 of Lawsonia intracellularis (strain PHE/MN1-00).